We begin with the raw amino-acid sequence, 312 residues long: Ribonuclease HIII (312 aa).

In terms of domain architecture, RNase H type-2 spans 95–311; it reads FNCIGSDEAG…REKAQKILKP (217 aa). Residues Asp101, Glu102, and Asp206 each contribute to the a divalent metal cation site.

Belongs to the RNase HII family. RnhC subfamily. Mn(2+) serves as cofactor. It depends on Mg(2+) as a cofactor.

Its subcellular location is the cytoplasm. The enzyme catalyses Endonucleolytic cleavage to 5'-phosphomonoester.. Endonuclease that specifically degrades the RNA of RNA-DNA hybrids. This is Ribonuclease HIII from Staphylococcus aureus (strain MW2).